A 289-amino-acid polypeptide reads, in one-letter code: Sphingomyelinase D (289 aa).

The signal sequence occupies residues 1–22; the sequence is MQSISVLICVLLALSILNFTVA. Residue H34 is part of the active site. Mg(2+) is bound by residues E54, D56, and D103. Positions 282–289 match the SMD-tail motif; that stretch reads ATEDDAPW.

Belongs to the sphingomyelinase D/phospholipase D family. It depends on Mg(2+) as a cofactor.

It localises to the secreted. The catalysed reaction is a sphingomyelin + H2O = an N-acylsphing-4-enine 1-phosphate + choline + H(+). With respect to regulation, sphingomyelinase activity is reduced by 33 percent following addition of EDTA. Catalyzes the hydrolysis of sphingomyelin. Sphingomyelinases D are produced by some spider in their venoms, but also by arthropods such as ticks, or pathogenic bacteria and fungi. They might play a role in pathogenicity through different mechanisms, such as membrane destabilization and host cell penetration, but also pulmonary inflammation and cutaneous lesions. This is Sphingomyelinase D from Aspergillus flavus (strain ATCC 200026 / FGSC A1120 / IAM 13836 / NRRL 3357 / JCM 12722 / SRRC 167).